The sequence spans 539 residues: CTP synthase (539 aa).

Positions 1–272 are amidoligase domain; that stretch reads MTLRSKMTKY…AQIILSHFKI (272 aa). Residue Ser19 coordinates CTP. Ser19 is a binding site for UTP. 20 to 25 serves as a coordination point for ATP; that stretch reads GLGKGV. Tyr60 contacts L-glutamine. Asp77 is an ATP binding site. Residues Asp77 and Glu147 each contribute to the Mg(2+) site. CTP contacts are provided by residues 154–156, 193–198, and Lys229; these read DIE and KSKPTQ. UTP-binding positions include 193–198 and Lys229; that span reads KSKPTQ. The Glutamine amidotransferase type-1 domain occupies 298-539; that stretch reads KILMVGKYVE…SFLRVLIKNN (242 aa). An L-glutamine-binding site is contributed by Gly360. The active-site Nucleophile; for glutamine hydrolysis is the Cys387. L-glutamine-binding positions include 388–391, Glu410, and Arg469; that span reads LGFQ. Catalysis depends on residues His514 and Glu516.

Belongs to the CTP synthase family. Homotetramer.

The enzyme catalyses UTP + L-glutamine + ATP + H2O = CTP + L-glutamate + ADP + phosphate + 2 H(+). The catalysed reaction is L-glutamine + H2O = L-glutamate + NH4(+). It carries out the reaction UTP + NH4(+) + ATP = CTP + ADP + phosphate + 2 H(+). It participates in pyrimidine metabolism; CTP biosynthesis via de novo pathway; CTP from UDP: step 2/2. With respect to regulation, allosterically activated by GTP, when glutamine is the substrate; GTP has no effect on the reaction when ammonia is the substrate. The allosteric effector GTP functions by stabilizing the protein conformation that binds the tetrahedral intermediate(s) formed during glutamine hydrolysis. Inhibited by the product CTP, via allosteric rather than competitive inhibition. In terms of biological role, catalyzes the ATP-dependent amination of UTP to CTP with either L-glutamine or ammonia as the source of nitrogen. Regulates intracellular CTP levels through interactions with the four ribonucleotide triphosphates. The sequence is that of CTP synthase from Mycoplasmopsis pulmonis (strain UAB CTIP) (Mycoplasma pulmonis).